The chain runs to 209 residues: Large ribosomal subunit protein uL3 (209 aa).

The segment at 141–163 (RAVGSMGASSDPSRTFKNKRMPG) is disordered.

Belongs to the universal ribosomal protein uL3 family. In terms of assembly, part of the 50S ribosomal subunit. Forms a cluster with proteins L14 and L19.

Its function is as follows. One of the primary rRNA binding proteins, it binds directly near the 3'-end of the 23S rRNA, where it nucleates assembly of the 50S subunit. The polypeptide is Large ribosomal subunit protein uL3 (Clostridium botulinum (strain ATCC 19397 / Type A)).